The chain runs to 377 residues: N-acetyldiaminopimelate deacetylase (377 aa).

Asp70 is a catalytic residue. Glu129 functions as the Proton acceptor in the catalytic mechanism.

This sequence belongs to the peptidase M20A family. N-acetyldiaminopimelate deacetylase subfamily.

It catalyses the reaction N-acetyl-(2S,6S)-2,6-diaminopimelate + H2O = (2S,6S)-2,6-diaminopimelate + acetate. It participates in amino-acid biosynthesis; L-lysine biosynthesis via DAP pathway; LL-2,6-diaminopimelate from (S)-tetrahydrodipicolinate (acetylase route): step 3/3. Its function is as follows. Catalyzes the conversion of N-acetyl-diaminopimelate to diaminopimelate and acetate. This chain is N-acetyldiaminopimelate deacetylase, found in Streptococcus thermophilus (strain ATCC BAA-491 / LMD-9).